Reading from the N-terminus, the 436-residue chain is Histidinol dehydrogenase (436 aa).

Substrate contacts are provided by T240, Q262, and H265. Q262 and H265 together coordinate Zn(2+). Catalysis depends on proton acceptor residues E331 and H332. Substrate contacts are provided by H332, D365, E419, and H424. D365 contacts Zn(2+). A Zn(2+)-binding site is contributed by H424.

The protein belongs to the histidinol dehydrogenase family. The cofactor is Zn(2+).

The catalysed reaction is L-histidinol + 2 NAD(+) + H2O = L-histidine + 2 NADH + 3 H(+). It functions in the pathway amino-acid biosynthesis; L-histidine biosynthesis; L-histidine from 5-phospho-alpha-D-ribose 1-diphosphate: step 9/9. Functionally, catalyzes the sequential NAD-dependent oxidations of L-histidinol to L-histidinaldehyde and then to L-histidine. The chain is Histidinol dehydrogenase from Leifsonia xyli subsp. xyli (strain CTCB07).